A 728-amino-acid polypeptide reads, in one-letter code: Procollagen-lysine,2-oxoglutarate 5-dioxygenase 1 (728 aa).

Residues Met1–Ala18 form the signal peptide. 2 N-linked (GlcNAc...) asparagine glycosylation sites follow: Asn198 and Asn539. The region spanning Gln637–Pro728 is the Fe2OG dioxygenase domain. Positions 657 and 659 each coordinate Fe cation. The N-linked (GlcNAc...) asparagine glycan is linked to Asn687. His709 is a binding site for Fe cation. Residue Arg719 is part of the active site.

As to quaternary structure, homodimer. Identified in a complex with P3H3 and P3H4. Requires Fe(2+) as cofactor. It depends on L-ascorbate as a cofactor. Highly expressed in the liver, heart, lung, skeletal muscle and kidney.

The protein resides in the rough endoplasmic reticulum membrane. The catalysed reaction is L-lysyl-[collagen] + 2-oxoglutarate + O2 = (5R)-5-hydroxy-L-lysyl-[collagen] + succinate + CO2. Functionally, part of a complex composed of PLOD1, P3H3 and P3H4 that catalyzes hydroxylation of lysine residues in collagen alpha chains and is required for normal assembly and cross-linkling of collagen fibrils. Forms hydroxylysine residues in -Xaa-Lys-Gly- sequences in collagens. These hydroxylysines serve as sites of attachment for carbohydrate units and are essential for the stability of the intermolecular collagen cross-links. This is Procollagen-lysine,2-oxoglutarate 5-dioxygenase 1 (Plod1) from Mus musculus (Mouse).